The chain runs to 212 residues: Ion-translocating oxidoreductase complex subunit G (212 aa).

The helical transmembrane segment at 9 to 29 (ASLLGLFALLCTALVALVNQF) threads the bilayer. The residue at position 176 (Thr176) is an FMN phosphoryl threonine.

The protein belongs to the RnfG family. As to quaternary structure, the complex is composed of six subunits: RnfA, RnfB, RnfC, RnfD, RnfE and RnfG. The cofactor is FMN.

The protein resides in the cell inner membrane. Part of a membrane-bound complex that couples electron transfer with translocation of ions across the membrane. In Shewanella loihica (strain ATCC BAA-1088 / PV-4), this protein is Ion-translocating oxidoreductase complex subunit G.